Here is a 321-residue protein sequence, read N- to C-terminus: Transaldolase (321 aa).

K132 acts as the Schiff-base intermediate with substrate in catalysis.

It belongs to the transaldolase family. Type 1 subfamily. Homodimer.

It is found in the cytoplasm. It carries out the reaction D-sedoheptulose 7-phosphate + D-glyceraldehyde 3-phosphate = D-erythrose 4-phosphate + beta-D-fructose 6-phosphate. It functions in the pathway carbohydrate degradation; pentose phosphate pathway; D-glyceraldehyde 3-phosphate and beta-D-fructose 6-phosphate from D-ribose 5-phosphate and D-xylulose 5-phosphate (non-oxidative stage): step 2/3. In terms of biological role, transaldolase is important for the balance of metabolites in the pentose-phosphate pathway. This Marinobacter nauticus (strain ATCC 700491 / DSM 11845 / VT8) (Marinobacter aquaeolei) protein is Transaldolase.